We begin with the raw amino-acid sequence, 152 residues long: Ribosome maturation factor RimP (152 aa).

It belongs to the RimP family.

It is found in the cytoplasm. Required for maturation of 30S ribosomal subunits. The protein is Ribosome maturation factor RimP of Clostridium beijerinckii (strain ATCC 51743 / NCIMB 8052) (Clostridium acetobutylicum).